A 196-amino-acid chain; its full sequence is GTP cyclohydrolase-2 (196 aa).

49-53 lines the GTP pocket; it reads RVHSE. 3 residues coordinate Zn(2+): C54, C65, and C67. GTP contacts are provided by residues Q70, 92–94, and T114; that span reads EGR. Residue D126 is the Proton acceptor of the active site. The Nucleophile role is filled by R128. 2 residues coordinate GTP: T149 and K154.

It belongs to the GTP cyclohydrolase II family. Homodimer. It depends on Zn(2+) as a cofactor.

The catalysed reaction is GTP + 4 H2O = 2,5-diamino-6-hydroxy-4-(5-phosphoribosylamino)-pyrimidine + formate + 2 phosphate + 3 H(+). It participates in cofactor biosynthesis; riboflavin biosynthesis; 5-amino-6-(D-ribitylamino)uracil from GTP: step 1/4. Functionally, catalyzes the conversion of GTP to 2,5-diamino-6-ribosylamino-4(3H)-pyrimidinone 5'-phosphate (DARP), formate and pyrophosphate. This Enterobacter sp. (strain 638) protein is GTP cyclohydrolase-2.